Consider the following 2183-residue polypeptide: MRRMFLVSRNGYKRWPEKQKLQTFRVLISTYIFSQPPILAQYHTIPCSNLKLYCRRPRSTMAKKNNKKSKAKAKKAAPSVAVPATNVASSVAADPAAVETASSTSASLSVPESAAATETTASTSPTSPVTNVSPLAEAIAGDEGSGSIPDDEEDIDEEEETGTEESAEAEAEPESPEGTTPVLTVQPNALAAEPTVETVDVVVPVPVEPEEDEQESEVKAEIDPVVAEIEQPEPPMASDKDFFSTLSKEEDGEEDVKEVATSTTTDVATPVATATPSITQVEKHLESRFMGNPVVENEKKHKEDEIREVEDQLTERLMRDPVVEGIKRERAEESAQVEEKLEKRFMEDPVVEQIKQEQADEYRKVRDQLETGSEEPNDDFFANLGSEEAKLQAKDTEPDTKHEDDFFSTLGGSSDETGKKTVAETQSEPETKTIETAKAEEAKPIETKTEPVAEDDFFSGLGKSEQEQGFVPEHTTAASTTTKEEDDFMASLAQPQNPEQTDPLPQDDFFSQLAEENVQSVSAEPEHKSPVAAPAATKAAAAEDDFFSQLGKSPEKSVPAAATSDDAPRRRHKVQPSGADFFDQLGVSETEAPPALHEPPQPKPITLSLDEDDDLLLTDEDDQAEVLAEAGKPNPPVQSFAFLEDDDLLESDQDFLETDDEDEEPMAAQTGGDFRANQQHQNTYFPSVPVAPVSTSRYSTPTVPSVSQFGGYGAAQSTPNMYQPVSSQSTPSAAAPGAGKRVDKNKSDAFDFPTGMIPKVVKKARSQQQLPQAHGAPGVTPGLMPAFGAAPGAPPTPGVPPMGPPVARPASNPYAPAPVQPPTTAPKKNFFEELPPIPVKPISRQPSYALSPPRAPFAQEASQQPRRVSDGYGMPSHGGPHSGVHSAPVSHHNSVSGPPAAAPHNPYAPPSGPSAVPPKTSSPYAHPPAAVPPKTSSPYAPPPPAVPPKSSSPYAPPPVSHSAPPAGGPPAGPPRGTSRGVPVPQPQPPVAAAAAAAAAAAAAAGTASGPPPAGPPRVSSRNAYAPPRGAPPRGTTPPVVAPAMAYSPNVSPKRVIQQPQTQSPRRYSEFKDIGQKSTVSDEALRKRQFPIFRWSNSKNATCLIAPQIGYATAVSQTSVRLLDVSKVVSTGEDITRFPGPLFTPNKGPVKSKKKELEKWVADHVNLLDSQNADADRVLLWKLVRVYLANDGVINSAQVRAFLTPHFEQSATGDGSAFTSAMDLSSSSFVPQQGDNGPSFSGSDANHVLRHLQSGSKDAAIRHCMDRRLWGHSMLIASTMGPEKWKDVVSEFIKDDVRPLYKPTLQFLYSSFGGVIPSSEAYGDWKETVSYLLSNAKDDGSDLSSLVSLGDDLVQKGYVAAGHFCYVVSRAPLTDKITLLGSEGRDLDAILLSETYEFALGLKTNVAIPQMQLYKLVHAEVLADLGNVAQAQRYAEYLNQALKSFTDKSSIIQPAYISRLIALSDRVSSTPGATTGSWFSRPKLDKVLGHLDKSLSKFVAGEEANVAGASSASDTVFSQIAATPGISRTTSVVDLSQQSAVTPGYQQHQPYGVPPTRASTGNILRPQGGSGPYDSRPSLPRSSSAMDAGPSGYGYERAPSVASVHSVQSDYPRVMSPIDVGGVSGGNSAYAPVGGAGIYPLPAGGSSAANAYAPGAGGNANAPPSGATANAYTPGATSSGPSPYALPSGNVYAPPSAPSASGASPYAPSASSFSPRQPAYGRSYASTPEHHIEEEEETEAVDQEQEPAADYSHLENENERYEQKSEPEPEPMAHPPPAQKAPPAAPPAQQAPAQKAGQKPPARKVAPPPKPSVKSVYNPYDPGSPAKEKKSSAAASNKYAPANSAYSPGNSSAPAPTANKEPEPATTSEAYGYGYGGGYGGYDPYSGYPAAEEEGAEPTETEVENEKAGEAEAAAADYPDYGVPSYGYQSQAADDAGDYGDDEGAIYTPAAVTLPPISNLPPVPLPGLEPATSAAPPASRYSAPTAAAEEEDDDDFGVGNKKPVAKKEEKKAEEKEEPKDGGKKGWFGGWFKKGEQQPADDKKVYKAKLGEKSNFYYSEEHKRWINGDLPIEDQIKGAGGPPPPPKAKKPAGPPAGGTPPPPSGGAPPVGASRGATPPVATPPAADTPPVPGAGGAPRPAATGAPRPKVVDPLEGFLTGGPPTGAPRKGARKSAKSRYVDIMNN.

8 disordered regions span residues 60-83 (TMAKKNNKKSKAKAKKAAPSVAVP), 102-198 (SSTS…TVET), 247-278 (SKEEDGEEDVKEVATSTTTDVATPVATATPSI), 358-608 (QADE…ITLS), 717-1071 (STPN…SEFK), 1541-1596 (TPGY…GYER), 1693-2044 (PPSA…KKVY), and 2066-2183 (GDLP…IMNN). Residues 64-75 (KNNKKSKAKAKK) show a composition bias toward basic residues. Residues 102 to 134 (SSTSASLSVPESAAATETTASTSPTSPVTNVSP) show a composition bias toward low complexity. Acidic residues predominate over residues 149 to 175 (PDDEEDIDEEEETGTEESAEAEAEPES). The segment covering 259–278 (VATSTTTDVATPVATATPSI) has biased composition (low complexity). 3 stretches are compositionally biased toward basic and acidic residues: residues 358-369 (QADEYRKVRDQL), 387-405 (EEAKLQAKDTEPDTKHEDD), and 429-451 (PETKTIETAKAEEAKPIETKTEP). Over residues 717–732 (STPNMYQPVSSQSTPS) the composition is skewed to polar residues. The segment covering 740 to 749 (KRVDKNKSDA) has biased composition (basic and acidic residues). Over residues 781-791 (PGLMPAFGAAP) the composition is skewed to low complexity. Pro residues-rich tracts occupy residues 792–807 (GAPPTPGVPPMGPPVA), 815–824 (APAPVQPPTT), and 906–916 (PYAPPSGPSAV). Low complexity-rich tracts occupy residues 990–1008 (VAAAAAAAAAAAAAAGTAS) and 1016–1043 (PRVSSRNAYAPPRGAPPRGTTPPVVAPA). Over residues 1697–1714 (PSASGASPYAPSASSFSP) the composition is skewed to low complexity. The segment covering 1733–1746 (EEEETEAVDQEQEP) has biased composition (acidic residues). Residues 1751-1766 (SHLENENERYEQKSEP) show a composition bias toward basic and acidic residues. The span at 1769–1785 (EPMAHPPPAQKAPPAAP) shows a compositional bias: pro residues. 2 stretches are compositionally biased toward low complexity: residues 1786 to 1804 (PAQQAPAQKAGQKPPARKV) and 1831 to 1846 (SAAASNKYAPANSAYS). Acidic residues-rich tracts occupy residues 1890–1902 (AEEEGAEPTETEV) and 1934–1943 (DAGDYGDDEG). Pro residues predominate over residues 1957–1966 (SNLPPVPLPG). A compositionally biased stretch (low complexity) spans 1969-1986 (PATSAAPPASRYSAPTAA). 2 stretches are compositionally biased toward basic and acidic residues: residues 2004–2022 (AKKEEKKAEEKEEPKDGGK) and 2031–2044 (KKGEQQPADDKKVY). Pro residues predominate over residues 2079–2104 (GPPPPPKAKKPAGPPAGGTPPPPSGG). A compositionally biased stretch (low complexity) spans 2105 to 2117 (APPVGASRGATPP). Residues 2118 to 2130 (VATPPAADTPPVP) are compositionally biased toward pro residues. The segment covering 2135–2146 (APRPAATGAPRP) has biased composition (low complexity).

This sequence belongs to the SEC16 family.

The protein resides in the endoplasmic reticulum membrane. Its function is as follows. Involved in the initiation of assembly of the COPII coat required for the formation of transport vesicles from the endoplasmic reticulum (ER) and the selection of cargo molecules. Also involved in autophagy. The protein is COPII coat assembly protein SEC16 (SEC16) of Yarrowia lipolytica (strain CLIB 122 / E 150) (Yeast).